Here is an 87-residue protein sequence, read N- to C-terminus: Small ribosomal subunit protein uS17 (87 aa).

Belongs to the universal ribosomal protein uS17 family. Part of the 30S ribosomal subunit.

Its function is as follows. One of the primary rRNA binding proteins, it binds specifically to the 5'-end of 16S ribosomal RNA. The sequence is that of Small ribosomal subunit protein uS17 from Alcanivorax borkumensis (strain ATCC 700651 / DSM 11573 / NCIMB 13689 / SK2).